The sequence spans 653 residues: Epithelial sodium channel subunit gamma (653 aa).

At 1-54 (MGHGRRISESIKKQLPVTGPEAPTVKNLMDWYLNNTNTHGCRRIAVSRGYLRRW) the chain is on the cytoplasmic side. Residues 55–75 (IWICFTVSSVGMIFWQWTLLL) traverse the membrane as a helical segment. The Extracellular segment spans residues 76-546 (MSYYTVSVSV…GGQLGLWMSC (471 aa)). Disulfide bonds link cysteine 100/cysteine 290, cysteine 214/cysteine 221, cysteine 267/cysteine 274, cysteine 379/cysteine 464, cysteine 401/cysteine 460, cysteine 405/cysteine 456, cysteine 414/cysteine 441, and cysteine 416/cysteine 430. A helical transmembrane segment spans residues 547 to 567 (SIVCFLEMWEVFLVDILTIIA). At 568–653 (RYWLHRGRQW…DEQVSDTEVN (86 aa)) the chain is on the cytoplasmic side. Positions 582-608 (KERQMQQPSPPDHDTGHHNPVCIDDED) are disordered.

This sequence belongs to the amiloride-sensitive sodium channel (TC 1.A.6) family. SCNN1G subfamily. Component of the heterotrimeric epithelial sodium channel (ENaC) composed of an alpha/SCNN1A, a beta/SCNN1B and a gamma/SCNN1G subunit. Strongly expressed in gill, liver, kidney and rectum and more weakly in heart, muscle and intestine.

Its subcellular location is the apical cell membrane. It carries out the reaction Na(+)(in) = Na(+)(out). Its activity is regulated as follows. Originally identified and characterized by its inhibition by the diuretic drug amiloride. In terms of biological role, this is one of the three pore-forming subunits of the heterotrimeric epithelial sodium channel (ENaC), a critical regulator of sodium balance and fluid homeostasis. ENaC operates in epithelial tissues, where it mediates the electrodiffusion of sodium ions from extracellular fluid through the apical membrane of cells, with water following osmotically. This chain is Epithelial sodium channel subunit gamma, found in Neoceratodus forsteri (Australian lungfish).